Here is a 267-residue protein sequence, read N- to C-terminus: Ribosomal RNA small subunit methyltransferase A (267 aa).

Residues asparagine 18, leucine 20, glycine 45, glutamate 66, aspartate 91, and asparagine 112 each contribute to the S-adenosyl-L-methionine site.

This sequence belongs to the class I-like SAM-binding methyltransferase superfamily. rRNA adenine N(6)-methyltransferase family. RsmA subfamily.

The protein resides in the cytoplasm. It catalyses the reaction adenosine(1518)/adenosine(1519) in 16S rRNA + 4 S-adenosyl-L-methionine = N(6)-dimethyladenosine(1518)/N(6)-dimethyladenosine(1519) in 16S rRNA + 4 S-adenosyl-L-homocysteine + 4 H(+). Specifically dimethylates two adjacent adenosines (A1518 and A1519) in the loop of a conserved hairpin near the 3'-end of 16S rRNA in the 30S particle. May play a critical role in biogenesis of 30S subunits. This Shewanella woodyi (strain ATCC 51908 / MS32) protein is Ribosomal RNA small subunit methyltransferase A.